We begin with the raw amino-acid sequence, 252 residues long: Vacuolar iron transporter 1 (252 aa).

Residues 1–38 (MAAATDGGGLPLLADKAASHSHHHHPERHFTSGEVVRD) are Cytoplasmic-facing. Residues 39–59 (VIMGVSDGLTVPFALAAGLSG) form a helical membrane-spanning segment. Topologically, residues 60 to 65 (ASAPSS) are vacuolar. A helical transmembrane segment spans residues 66–86 (LVLTAGLAEVAAGAISMGLGG). The Cytoplasmic portion of the chain corresponds to 87–170 (YLAAKSEADH…PDPKRAIQSA (84 aa)). The tract at residues 92–167 (SEADHYQREM…LEKPDPKRAI (76 aa)) is cytoplasmic metal binding domain (MBD). Residues E104, E107, E115, E118, M151, and E155 each contribute to the Fe cation site. A helical membrane pass occupies residues 171 to 191 (LTIALSYVIGGLVPLLPYMFI). Over 192–196 (STAQN) the chain is Vacuolar. Residues 197–217 (AMLTSVGVTLVALLFFGYIKG) traverse the membrane as a helical segment. The Cytoplasmic segment spans residues 218-224 (RFTGNRP). A helical membrane pass occupies residues 225–245 (FLSAVQTAIIGALASAAAYGM). Topologically, residues 246–252 (AKAVQTR) are vacuolar.

Belongs to the CCC1 family. Homodimer. The dimeric interaction is mediated by both the transmembrane domains (TMDs) and the cytoplasmic metal binding domain (MBD). Highly expressed in leaf blades. Expressed in leaf sheaths.

Its subcellular location is the vacuole membrane. The catalysed reaction is Fe(2+)(in) = Fe(2+)(out). Functionally, vacuolar iron transporter involved in the transfer of iron ions from the cytosol to the vacuole for intracellular iron storage. Vacuolar iron storage is required for seed embryo and seedling development. May be involved in the regulation of iron translocation between flag leaves and seeds. Can transport zinc ions from the cytosol to the vacuole. This is Vacuolar iron transporter 1 from Oryza sativa subsp. japonica (Rice).